The primary structure comprises 185 residues: Ribosome-recycling factor (185 aa).

It belongs to the RRF family.

It localises to the cytoplasm. In terms of biological role, responsible for the release of ribosomes from messenger RNA at the termination of protein biosynthesis. May increase the efficiency of translation by recycling ribosomes from one round of translation to another. In Shewanella baltica (strain OS185), this protein is Ribosome-recycling factor.